A 492-amino-acid chain; its full sequence is MEPTSKKLTGRLMLAVGGAVLGSLQFGYNTGVINAPQKVIEEFYNQTWVQRYGEPIPPATLTTLWSLSVAIFSVGGMIGSFSVGLFVNRFGRRNSMLMMNLLAFVSAVLMGFSKLGKSFEMLILGRFIIGVYCGLTTGFVPMYVGEVSPTELRGALGTLHQLGIVVGILIAQVFGLDSIMGNQELWPLLLSVIFIPALLQCILLPFCPESPRFLLINRNEENRAKSVLKKLRGTADVTRDLQEMKEESRQMMREKKVTILELFRSAAYRQPILIAVVLQLSQQLSGINAVFYYSTSIFEKAGVQQPVYATIGSGIVNTAFTVVSLFVVERAGRRTLHLIGLAGMAGCAVLMTIALALLERLPWMSYLSIVAIFGFVAFFEVGPGPIPWFIVAELFSQGPRPAAIAVAGFSNWTSNFIVGMCFQYVEQLCGPYVFIIFTVLLVLFFIFTYFKVPETKGRTFDEIASGFRQGGASQSDKTPEELFHPLGADSQV.

N-acetylmethionine is present on methionine 1. At 1-11 (MEPTSKKLTGR) the chain is on the cytoplasmic side. The helical transmembrane segment at 12–33 (LMLAVGGAVLGSLQFGYNTGVI) threads the bilayer. The Extracellular segment spans residues 34 to 66 (NAPQKVIEEFYNQTWVQRYGEPIPPATLTTLWS). An N-linked (GlcNAc...) asparagine glycan is attached at asparagine 45. A helical membrane pass occupies residues 67-87 (LSVAIFSVGGMIGSFSVGLFV). Topologically, residues 88–90 (NRF) are cytoplasmic. The helical transmembrane segment at 91–112 (GRRNSMLMMNLLAFVSAVLMGF) threads the bilayer. The Extracellular portion of the chain corresponds to 113–120 (SKLGKSFE). Residues 121–144 (MLILGRFIIGVYCGLTTGFVPMYV) form a helical membrane-spanning segment. Residues 145 to 155 (GEVSPTELRGA) lie on the Cytoplasmic side of the membrane. Residues 156-176 (LGTLHQLGIVVGILIAQVFGL) traverse the membrane as a helical segment. Position 161 (glutamine 161) interacts with D-glucose. Residues 177–185 (DSIMGNQEL) lie on the Extracellular side of the membrane. A helical membrane pass occupies residues 186-206 (WPLLLSVIFIPALLQCILLPF). Residues 207–271 (CPESPRFLLI…LFRSAAYRQP (65 aa)) are Cytoplasmic-facing. Serine 226 carries the post-translational modification Phosphoserine. A helical transmembrane segment spans residues 272–293 (ILIAVVLQLSQQLSGINAVFYY). Residues 282–283 (QQ) and asparagine 288 contribute to the D-glucose site. Topologically, residues 294–306 (STSIFEKAGVQQP) are extracellular. Residues 307–328 (VYATIGSGIVNTAFTVVSLFVV) traverse the membrane as a helical segment. Asparagine 317 is a binding site for D-glucose. The Cytoplasmic segment spans residues 329 to 334 (ERAGRR). A helical transmembrane segment spans residues 335 to 355 (TLHLIGLAGMAGCAVLMTIAL). Residues 356–365 (ALLERLPWMS) are Extracellular-facing. A helical membrane pass occupies residues 366 to 388 (YLSIVAIFGFVAFFEVGPGPIPW). Glutamate 380 and tryptophan 388 together coordinate D-glucose. The Cytoplasmic segment spans residues 389-401 (FIVAELFSQGPRP). Residues 402–422 (AAIAVAGFSNWTSNFIVGMCF) form a helical membrane-spanning segment. The Extracellular portion of the chain corresponds to 423-429 (QYVEQLC). Residues 430–450 (GPYVFIIFTVLLVLFFIFTYF) traverse the membrane as a helical segment. Topologically, residues 451–492 (KVPETKGRTFDEIASGFRQGGASQSDKTPEELFHPLGADSQV) are cytoplasmic. Residue serine 465 is modified to Phosphoserine. The segment at 468–492 (RQGGASQSDKTPEELFHPLGADSQV) is disordered. Threonine 478 carries the phosphothreonine modification. Position 490 is a phosphoserine (serine 490).

This sequence belongs to the major facilitator superfamily. Sugar transporter (TC 2.A.1.1) family. Glucose transporter subfamily. As to quaternary structure, found in a complex with ADD2, DMTN and SLC2A1. Interacts (via C-terminus cytoplasmic region) with DMTN. Interacts with SNX27; the interaction is required when endocytosed to prevent degradation in lysosomes and promote recycling to the plasma membrane. Interacts with GIPC (via PDZ domain). Interacts with STOM. Interacts with SGTA (via Gln-rich region). Interacts with BSG. Interacts with SMIM43; the interaction may promote SLC2A1-mediated glucose transport to meet the energy needs of mesendoderm differentiation. Post-translationally, phosphorylation at Ser-226 by PKC promotes glucose uptake by increasing cell membrane localization. Detected in brain capillary (at protein level). Detected in brain capillary.

The protein localises to the cell membrane. Its subcellular location is the photoreceptor inner segment. It carries out the reaction D-glucose(out) = D-glucose(in). With respect to regulation, the uptake of glucose is inhibited by cytochalasin B. Glucose uptake is increased in response to phorbol ester 12-O-tetradecanoylphorbol-13-acetate (TPA) treatment: TPA-induced glucose uptake requires phosphorylation at Ser-226. Functionally, facilitative glucose transporter, which is responsible for constitutive or basal glucose uptake. Has a very broad substrate specificity; can transport a wide range of aldoses including both pentoses and hexoses. Most important energy carrier of the brain: present at the blood-brain barrier and assures the energy-independent, facilitative transport of glucose into the brain. In association with BSG and NXNL1, promotes retinal cone survival by increasing glucose uptake into photoreceptors. Required for mesendoderm differentiation. The protein is Solute carrier family 2, facilitated glucose transporter member 1 of Bos taurus (Bovine).